The sequence spans 200 residues: MYAYVKGKLTHLYPTHVVVETAGVGYEIQTPNSYRFQKHLDHEVLIRTSLIVREDAQLLYGFSSEEEKDMFLSLIKVTGIGPKSALAILATSTPNEVKRAIENENDTYLTKFPGIGKKTARQIVLDLKGKVKITEEDSDSLLQVDATSTVQDQFVQEAMLALEALGYSKRELAKVEKTLNKNKYDSVDEAVKAGLQLVVS.

The tract at residues Met1–Ser63 is domain I. The interval Ser64 to Leu142 is domain II. Residues Gln143–Thr149 are flexible linker. The segment at Val150–Ser200 is domain III.

Belongs to the RuvA family. In terms of assembly, homotetramer. Forms an RuvA(8)-RuvB(12)-Holliday junction (HJ) complex. HJ DNA is sandwiched between 2 RuvA tetramers; dsDNA enters through RuvA and exits via RuvB. An RuvB hexamer assembles on each DNA strand where it exits the tetramer. Each RuvB hexamer is contacted by two RuvA subunits (via domain III) on 2 adjacent RuvB subunits; this complex drives branch migration. In the full resolvosome a probable DNA-RuvA(4)-RuvB(12)-RuvC(2) complex forms which resolves the HJ.

The protein localises to the cytoplasm. Functionally, the RuvA-RuvB-RuvC complex processes Holliday junction (HJ) DNA during genetic recombination and DNA repair, while the RuvA-RuvB complex plays an important role in the rescue of blocked DNA replication forks via replication fork reversal (RFR). RuvA specifically binds to HJ cruciform DNA, conferring on it an open structure. The RuvB hexamer acts as an ATP-dependent pump, pulling dsDNA into and through the RuvAB complex. HJ branch migration allows RuvC to scan DNA until it finds its consensus sequence, where it cleaves and resolves the cruciform DNA. The sequence is that of Holliday junction branch migration complex subunit RuvA from Staphylococcus aureus (strain Mu3 / ATCC 700698).